The sequence spans 692 residues: Methionine--tRNA ligase (692 aa).

The 'HIGH' region motif lies at 15-25 (PYANGPIHLGH). Cys146, Cys149, Cys159, and Cys162 together coordinate Zn(2+). Positions 332–336 (KMSKS) match the 'KMSKS' region motif. Lys335 is an ATP binding site. The disordered stretch occupies residues 552 to 577 (TTEAAPEKKAKKSAETADVAVDTRSP). The segment covering 556–566 (APEKKAKKSAE) has biased composition (basic and acidic residues). Residues 591-692 (DFAKLDLRIA…EGAQPGMRVK (102 aa)) enclose the tRNA-binding domain.

The protein belongs to the class-I aminoacyl-tRNA synthetase family. MetG type 1 subfamily. Homodimer. Requires Zn(2+) as cofactor.

It localises to the cytoplasm. The enzyme catalyses tRNA(Met) + L-methionine + ATP = L-methionyl-tRNA(Met) + AMP + diphosphate. Its function is as follows. Is required not only for elongation of protein synthesis but also for the initiation of all mRNA translation through initiator tRNA(fMet) aminoacylation. This chain is Methionine--tRNA ligase, found in Shewanella sediminis (strain HAW-EB3).